Here is a 387-residue protein sequence, read N- to C-terminus: MVFISETSDDGSNGGDPTKNPQEEEEENLPPIPQGIPDELIESTVLLIRRCHYPTLSLLSKTFRRVISSSELYKSRFILNLTDSVLYALIGFSPYNTTNLYILNCNIPRNISLHLREIKSLPPLNHGSAVVTIGYHMYVIGGHNRLHQPTSNVSIIDLRFHTSCSLPRMQRTRVYAAAGVIDGRIYVIGGCVKRNDHWIEVFDIENRIWSSVPHHRYCNGSSLRGEGFVTSVVMQNKIYILDSLFGFAYEPRHGTLQSLGFETQFMFLWRDPCCVIEGLLYCIDPMCVLGHAIVVYDPNELIWRRVKGAYILPKFCYYQCKMANFGGKLAILGCSNSSQRGLKDVWFVEIELENRQSGEIWGKVDSLAIVLRSVKSPSIDLFRSVTF.

Residues 1 to 34 form a disordered region; that stretch reads MVFISETSDDGSNGGDPTKNPQEEEEENLPPIPQ. Residues 31-78 enclose the F-box domain; that stretch reads PIPQGIPDELIESTVLLIRRCHYPTLSLLSKTFRRVISSSELYKSRFI. An LRR 1 repeat occupies 105 to 128; that stretch reads CNIPRNISLHLREIKSLPPLNHGS. 2 Kelch repeats span residues 136–183 and 184–231; these read HMYV…VIDG and RIYV…FVTS. Residues 196–219 form an LRR 2 repeat; it reads DHWIEVFDIENRIWSSVPHHRYCN.

The polypeptide is F-box/LRR-repeat/kelch-repeat protein At2g29770 (Arabidopsis thaliana (Mouse-ear cress)).